A 306-amino-acid chain; its full sequence is Ribosomal RNA small subunit methyltransferase H (306 aa).

S-adenosyl-L-methionine-binding positions include 36–38 (GGH), Asp-56, Phe-80, Asp-97, and Gln-104. Positions 280-306 (ASEEEVAGNPRSRSAVMRVAERTGEAA) are disordered.

This sequence belongs to the methyltransferase superfamily. RsmH family.

The protein localises to the cytoplasm. The catalysed reaction is cytidine(1402) in 16S rRNA + S-adenosyl-L-methionine = N(4)-methylcytidine(1402) in 16S rRNA + S-adenosyl-L-homocysteine + H(+). In terms of biological role, specifically methylates the N4 position of cytidine in position 1402 (C1402) of 16S rRNA. The chain is Ribosomal RNA small subunit methyltransferase H from Polaromonas naphthalenivorans (strain CJ2).